We begin with the raw amino-acid sequence, 347 residues long: Protein RecA (347 aa).

64–71 (GPESSGKT) is a binding site for ATP.

This sequence belongs to the RecA family.

It localises to the cytoplasm. In terms of biological role, can catalyze the hydrolysis of ATP in the presence of single-stranded DNA, the ATP-dependent uptake of single-stranded DNA by duplex DNA, and the ATP-dependent hybridization of homologous single-stranded DNAs. It interacts with LexA causing its activation and leading to its autocatalytic cleavage. This Bartonella quintana (strain Toulouse) (Rochalimaea quintana) protein is Protein RecA.